Consider the following 1040-residue polypeptide: Multidrug resistance protein MdtB (1040 aa).

12 consecutive transmembrane segments (helical) span residues 16–36 (FIMR…AGII), 342–362 (DTQF…YLFL), 369–389 (IIPG…MVFL), 396–416 (LTLM…IVVI), 440–460 (IGFT…PLLF), 472–492 (FAVT…TLTP), 537–557 (WLTL…WVFI), 863–883 (LGST…VLGV), 888–908 (FIHP…ALLA), 911–931 (LAGS…IGIV), 968–988 (ILMT…STGV), and 998–1018 (IGMV…TPVI).

The protein belongs to the resistance-nodulation-cell division (RND) (TC 2.A.6) family. MdtB subfamily. Part of a tripartite efflux system composed of MdtA, MdtB and MdtC. MdtB forms a heteromultimer with MdtC.

The protein localises to the cell inner membrane. In Klebsiella pneumoniae (strain 342), this protein is Multidrug resistance protein MdtB.